A 404-amino-acid polypeptide reads, in one-letter code: Imidazolonepropionase (404 aa).

Residues His73 and His75 each contribute to the Fe(3+) site. Zn(2+) contacts are provided by His73 and His75. 4-imidazolone-5-propanoate contacts are provided by Arg82, Tyr145, and His178. Tyr145 lines the N-formimidoyl-L-glutamate pocket. Residue His243 participates in Fe(3+) binding. His243 provides a ligand contact to Zn(2+). Gln246 is a 4-imidazolone-5-propanoate binding site. Asp318 contacts Fe(3+). Residue Asp318 coordinates Zn(2+). 2 residues coordinate N-formimidoyl-L-glutamate: Asn320 and Gly322. Residue Ser323 coordinates 4-imidazolone-5-propanoate.

This sequence belongs to the metallo-dependent hydrolases superfamily. HutI family. It depends on Zn(2+) as a cofactor. The cofactor is Fe(3+).

The protein localises to the cytoplasm. The catalysed reaction is 4-imidazolone-5-propanoate + H2O = N-formimidoyl-L-glutamate. Its pathway is amino-acid degradation; L-histidine degradation into L-glutamate; N-formimidoyl-L-glutamate from L-histidine: step 3/3. Its function is as follows. Catalyzes the hydrolytic cleavage of the carbon-nitrogen bond in imidazolone-5-propanoate to yield N-formimidoyl-L-glutamate. It is the third step in the universal histidine degradation pathway. In Bradyrhizobium sp. (strain BTAi1 / ATCC BAA-1182), this protein is Imidazolonepropionase.